Here is a 198-residue protein sequence, read N- to C-terminus: Endoribonuclease YbeY (198 aa).

Residues His156, His160, and His166 each coordinate Zn(2+).

This sequence belongs to the endoribonuclease YbeY family. Zn(2+) serves as cofactor.

The protein resides in the cytoplasm. Single strand-specific metallo-endoribonuclease involved in late-stage 70S ribosome quality control and in maturation of the 3' terminus of the 16S rRNA. In Cupriavidus necator (strain ATCC 17699 / DSM 428 / KCTC 22496 / NCIMB 10442 / H16 / Stanier 337) (Ralstonia eutropha), this protein is Endoribonuclease YbeY.